The following is a 352-amino-acid chain: Ketol-acid reductoisomerase (NAD(+)) (352 aa).

One can recognise a KARI N-terminal Rossmann domain in the interval 11–199 (ENVVTSEEFT…AIGSGYLFPT (189 aa)). NAD(+) is bound by residues 38–41 (YGVQ) and 100–103 (DAGQ). Histidine 124 is a catalytic residue. Residue glycine 153 participates in NAD(+) binding. Positions 200 to 347 (TFEKEVFSDL…AAVRALRPEN (148 aa)) constitute a KARI C-terminal knotted domain. Aspartate 208, glutamate 212, glutamate 244, and glutamate 248 together coordinate Mg(2+). Serine 270 contacts substrate.

It belongs to the ketol-acid reductoisomerase family. Mg(2+) is required as a cofactor.

It carries out the reaction (2R)-2,3-dihydroxy-3-methylbutanoate + NAD(+) = (2S)-2-acetolactate + NADH + H(+). It participates in amino-acid biosynthesis; L-isoleucine biosynthesis; L-isoleucine from 2-oxobutanoate: step 2/4. The protein operates within amino-acid biosynthesis; L-valine biosynthesis; L-valine from pyruvate: step 2/4. Its function is as follows. Involved in the biosynthesis of branched-chain amino acids (BCAA). Catalyzes an alkyl-migration followed by a ketol-acid reduction of (S)-2-acetolactate (S2AL) to yield (R)-2,3-dihydroxy-isovalerate. In the isomerase reaction, S2AL is rearranged via a Mg-dependent methyl migration to produce 3-hydroxy-3-methyl-2-ketobutyrate (HMKB). In the reductase reaction, this 2-ketoacid undergoes a metal-dependent reduction by NADH to yield (R)-2,3-dihydroxy-isovalerate. This chain is Ketol-acid reductoisomerase (NAD(+)), found in Desulfosudis oleivorans (strain DSM 6200 / JCM 39069 / Hxd3) (Desulfococcus oleovorans).